The following is a 75-amino-acid chain: Guanine nucleotide-binding protein G(I)/G(S)/G(O) subunit gamma-4 (75 aa).

C72 bears the Cysteine methyl ester mark. C72 carries S-geranylgeranyl cysteine lipidation. Positions T73 to L75 are cleaved as a propeptide — removed in mature form.

This sequence belongs to the G protein gamma family. G proteins are composed of 3 units, alpha, beta and gamma. Interacts with beta-1 and beta-2, but not with beta-3. Interacts with KCNK1. Interacts (via C-terminus) with KCNK2/TREK-1 (via N-terminus); this interaction confers ion selectivity to Cl(-) and L-glutamate. As to expression, brain.

The protein localises to the cell membrane. In terms of biological role, guanine nucleotide-binding proteins (G proteins) are involved as a modulator or transducer in various transmembrane signaling systems. The beta and gamma chains are required for the GTPase activity, for replacement of GDP by GTP, and for G protein-effector interaction. In Mus musculus (Mouse), this protein is Guanine nucleotide-binding protein G(I)/G(S)/G(O) subunit gamma-4 (Gng4).